Consider the following 327-residue polypeptide: Protein EMSY-LIKE 1 (327 aa).

The ENT domain occupies 1 to 88 (METQIHQLEQ…HATIQPFDVL (88 aa)). A coiled-coil region spans residues 32–58 (ESLITELRKELRVSDDEHRELLSRVNK). 2 disordered regions span residues 206 to 257 (GHGS…SDDI) and 305 to 327 (ADTS…MPQG). Residues 214–232 (GNRRGQIHGGRGRGPRIHQ) are compositionally biased toward basic residues. A coiled-coil region spans residues 281 to 306 (LELDKAKKMLKEHEQALIAAIARLAD). Residue serine 308 is modified to Phosphoserine. Over residues 318-327 (YSHDHPMPQG) the composition is skewed to basic and acidic residues.

Isoform 1 interacts with EDM2 in nucleus.

Its subcellular location is the nucleus. Its function is as follows. Probably involved in the regulation of chromatin states. Contributes to RPP7-mediated and basal immunity, especially against Hyaloperonospora arabidopsidis isolate Hiks1. Regulates negatively EDM2-dependent floral transition. The polypeptide is Protein EMSY-LIKE 1 (Arabidopsis thaliana (Mouse-ear cress)).